Reading from the N-terminus, the 302-residue chain is tRNA pseudouridine synthase B (302 aa).

The active-site Nucleophile is Asp-47.

The protein belongs to the pseudouridine synthase TruB family. Type 1 subfamily.

It catalyses the reaction uridine(55) in tRNA = pseudouridine(55) in tRNA. Its function is as follows. Responsible for synthesis of pseudouridine from uracil-55 in the psi GC loop of transfer RNAs. This is tRNA pseudouridine synthase B from Methylobacillus flagellatus (strain ATCC 51484 / DSM 6875 / VKM B-1610 / KT).